A 407-amino-acid chain; its full sequence is Multifunctional CCA protein (407 aa).

ATP is bound by residues Gly8 and Arg11. Gly8 and Arg11 together coordinate CTP. The Mg(2+) site is built by Asp21 and Asp23. ATP is bound by residues Arg91, Arg137, and Arg140. 3 residues coordinate CTP: Arg91, Arg137, and Arg140. One can recognise an HD domain in the interval 228-329 (TGIHTLLVAE…VKIFNKLDVW (102 aa)).

The protein belongs to the tRNA nucleotidyltransferase/poly(A) polymerase family. Bacterial CCA-adding enzyme type 1 subfamily. Monomer. Can also form homodimers and oligomers. It depends on Mg(2+) as a cofactor. Ni(2+) serves as cofactor.

The enzyme catalyses a tRNA precursor + 2 CTP + ATP = a tRNA with a 3' CCA end + 3 diphosphate. The catalysed reaction is a tRNA with a 3' CCA end + 2 CTP + ATP = a tRNA with a 3' CCACCA end + 3 diphosphate. Functionally, catalyzes the addition and repair of the essential 3'-terminal CCA sequence in tRNAs without using a nucleic acid template. Adds these three nucleotides in the order of C, C, and A to the tRNA nucleotide-73, using CTP and ATP as substrates and producing inorganic pyrophosphate. tRNA 3'-terminal CCA addition is required both for tRNA processing and repair. Also involved in tRNA surveillance by mediating tandem CCA addition to generate a CCACCA at the 3' terminus of unstable tRNAs. While stable tRNAs receive only 3'-terminal CCA, unstable tRNAs are marked with CCACCA and rapidly degraded. This is Multifunctional CCA protein from Vibrio vulnificus (strain YJ016).